Reading from the N-terminus, the 527-residue chain is MASLSLPITLKNPRFFSSSPQNIFKTQPQTLVLTTKFKTCSIICSSSCTSISSSTTQQKQSNKQTHVSDNKREEKAEEEEEEKEVSLREIWREVQGCNNWEGQLDPMNNHLRREIIRYGEFAQACYDSFDFDPHSKYCGSCKYHPSDFFLNLDLHLHKGYTITRYLYATSNINLPNFFQKSKLSSIWSQHANWMGFVAVATDEEEVSRLGRRDIVIAWRGTVTYLEWIYDLKDILCSANFGDDPSIKIELGFHDLYTKKEDSCKFSSFSAREQVLAEVKRLIEYYGTEEEGHKTSITVTGHSLGASLALVSAYDIAELNLNHVPENNYKIPITVFSFSGPRVGNLRFKERCDELGVKVLRVVNVHDKVPSVPGIFTNEKFQFQKYVEEKTSFPWSYAHVGVELALDHKKSPFLKPTKDLGCAHNLEALLHLVDGYHGKDEEAEKRFCLVTKRDIALVNKSCDFLRGEYHVPPCWRQDENKGMVKNGDGQWVLPDRPLLEPHGPEDIAHHLQQVLGKVNDDNFKPTTT.

A chloroplast-targeting transit peptide spans 1 to 52 (MASLSLPITLKNPRFFSSSPQNIFKTQPQTLVLTTKFKTCSIICSSSCTSIS). Residues 55–65 (TTQQKQSNKQT) are compositionally biased toward low complexity. Residues 55–82 (TTQQKQSNKQTHVSDNKREEKAEEEEEE) form a disordered region. The segment covering 66–75 (HVSDNKREEK) has biased composition (basic and acidic residues). A GXSXG motif is present at residues 300–304 (GHSLG). Catalysis depends on serine 302, which acts as the Acyl-ester intermediate. Active-site charge relay system residues include aspartate 366 and histidine 423.

It belongs to the AB hydrolase superfamily. Lipase family. As to expression, highly expressed in flowers. Lower levels in seedlings, leaves and stems.

The protein resides in the plastid. It localises to the chloroplast. It catalyses the reaction 1,2-dihexadecanoyl-sn-glycero-3-phosphocholine + H2O = 2-hexadecanoyl-sn-glycero-3-phosphocholine + hexadecanoate + H(+). It carries out the reaction a 1,2-diacyl-3-O-(beta-D-galactosyl)-sn-glycerol + H2O = an acyl-3-O-(beta-D-galactosyl)-sn-glycerol + a fatty acid + H(+). The catalysed reaction is a 1,2-diacyl-3-O-[alpha-D-galactosyl-(1-&gt;6)-beta-D-galactosyl]-sn-glycerol + H2O = acyl-3-O-[alpha-D-galactosyl-(1-&gt;6)-beta-D-galactosyl]-sn-glycerol + a fatty acid + H(+). In terms of biological role, acylhydrolase that catalyzes the hydrolysis of phosphatidylcholine at the sn-1 position. Moderate activity toward phosphatidylcholine (PC), monogalactosyldiacylglycerol (MGDG), digalactosyldiacylglycerol (DGDG) and triacylglycerol (TAG). This Arabidopsis thaliana (Mouse-ear cress) protein is Phospholipase A1-Igamma3, chloroplastic.